The chain runs to 175 residues: Protein GrpE (175 aa).

The interval 1-35 (MSEQKQEIENENAQNSENLQDDLQDNEKNETNELQ) is disordered. Basic and acidic residues predominate over residues 25-35 (DNEKNETNELQ).

It belongs to the GrpE family. Homodimer.

It localises to the cytoplasm. In terms of biological role, participates actively in the response to hyperosmotic and heat shock by preventing the aggregation of stress-denatured proteins, in association with DnaK and GrpE. It is the nucleotide exchange factor for DnaK and may function as a thermosensor. Unfolded proteins bind initially to DnaJ; upon interaction with the DnaJ-bound protein, DnaK hydrolyzes its bound ATP, resulting in the formation of a stable complex. GrpE releases ADP from DnaK; ATP binding to DnaK triggers the release of the substrate protein, thus completing the reaction cycle. Several rounds of ATP-dependent interactions between DnaJ, DnaK and GrpE are required for fully efficient folding. This chain is Protein GrpE, found in Campylobacter jejuni (strain RM1221).